The following is a 242-amino-acid chain: uncharacterized protein (242 aa).

Positions 198, 218, and 227 each coordinate S-adenosyl-L-methionine.

Belongs to the class IV-like SAM-binding methyltransferase superfamily. RNA methyltransferase TrmH family.

This is an uncharacterized protein from Mycoplasma pneumoniae (strain ATCC 29342 / M129 / Subtype 1) (Mycoplasmoides pneumoniae).